Consider the following 224-residue polypeptide: Orotate phosphoribosyltransferase (224 aa).

Residues Lys26, 73–74 (YK), Arg100, Lys101, Lys104, His106, and 127–135 (EDVTTAGTS) contribute to the 5-phospho-alpha-D-ribose 1-diphosphate site. The orotate site is built by Thr131 and Arg160.

The protein belongs to the purine/pyrimidine phosphoribosyltransferase family. PyrE subfamily. In terms of assembly, homodimer. Requires Mg(2+) as cofactor.

The catalysed reaction is orotidine 5'-phosphate + diphosphate = orotate + 5-phospho-alpha-D-ribose 1-diphosphate. Its pathway is pyrimidine metabolism; UMP biosynthesis via de novo pathway; UMP from orotate: step 1/2. Its function is as follows. Catalyzes the transfer of a ribosyl phosphate group from 5-phosphoribose 1-diphosphate to orotate, leading to the formation of orotidine monophosphate (OMP). The chain is Orotate phosphoribosyltransferase from Clostridium beijerinckii (strain ATCC 51743 / NCIMB 8052) (Clostridium acetobutylicum).